Reading from the N-terminus, the 291-residue chain is Elongation factor Ts (291 aa).

Residues 79-82 (TDFV) form an involved in Mg(2+) ion dislocation from EF-Tu region.

This sequence belongs to the EF-Ts family.

The protein resides in the cytoplasm. Its function is as follows. Associates with the EF-Tu.GDP complex and induces the exchange of GDP to GTP. It remains bound to the aminoacyl-tRNA.EF-Tu.GTP complex up to the GTP hydrolysis stage on the ribosome. This is Elongation factor Ts from Anaplasma marginale (strain St. Maries).